The sequence spans 293 residues: tRNA pseudouridine synthase B (293 aa).

Asp-38 functions as the Nucleophile in the catalytic mechanism.

It belongs to the pseudouridine synthase TruB family. Type 1 subfamily.

The enzyme catalyses uridine(55) in tRNA = pseudouridine(55) in tRNA. Functionally, responsible for synthesis of pseudouridine from uracil-55 in the psi GC loop of transfer RNAs. In Microcystis aeruginosa (strain NIES-843 / IAM M-2473), this protein is tRNA pseudouridine synthase B.